Consider the following 38-residue polypeptide: MTEAERFQMIKESVSKNAEKLTRMDIFEMVRKKKIIHD.

This is an uncharacterized protein from Archaeoglobus fulgidus (strain ATCC 49558 / DSM 4304 / JCM 9628 / NBRC 100126 / VC-16).